A 461-amino-acid polypeptide reads, in one-letter code: Lysosomal dipeptide transporter MFSD1 (461 aa).

Basic and acidic residues predominate over residues 1–13 (MADREEHQGLLDG). The tract at residues 1-22 (MADREEHQGLLDGDRDEDEGDK) is disordered. Residues 10–11 (LL) carry the Dileucine internalization motif motif. The next 10 membrane-spanning stretches (helical) occupy residues 37–57 (LLHRILVLIFMCFLGFGSYFC), 81–101 (QLYAWYSWPNVVLCFLGGFLL), 111–131 (TVIFSLFVLVGQIIFAAGALA), 134–154 (FWLMNVGRFVFGIGGESLAVA), 264–284 (LWLIFIICVAYYVAIFPFIGL), 302–322 (AINSVVYIISAPASPLLGFLV), 331–351 (WVMLAVITTLLSHMMLAFTFW), 359–379 (LLGVSYSLLACALWPMVAFVV), 390–410 (FMQSIQNLGLAVMSIAAGSIL), and 416–436 (LFLEVFFIACLCMALLAVVLL).

This sequence belongs to the major facilitator superfamily. Homodimer. Interacts with lysosomal protein GLMP (via lumenal domain); the interaction starts while both proteins are still in the endoplasmic reticulum and is required for stabilization of MFSD1 in lysosomes but has no direct effect on its targeting to lysosomes or transporter activity.

It is found in the lysosome membrane. It catalyses the reaction L-alpha-aminoacyl-L-arginine(out) = L-alpha-aminoacyl-L-arginine(in). It carries out the reaction L-arginyl-L-alpha-amino acid(out) = L-arginyl-L-alpha-amino acid(in). The catalysed reaction is L-arginyl-glycine(out) = L-arginyl-glycine(in). The enzyme catalyses L-alpha-aminoacyl-L-lysine(out) = L-alpha-aminoacyl-L-lysine(in). It catalyses the reaction L-aspartyl-L-lysine(out) = L-aspartyl-L-lysine(in). It carries out the reaction L-alanyl-L-lysine(out) = L-alanyl-L-lysine(in). The catalysed reaction is L-lysyl-L-alpha-amino acid(out) = L-lysyl-L-alpha-amino acid(in). The enzyme catalyses L-lysyl-L-alanine(out) = L-lysyl-L-alanine(in). It catalyses the reaction L-lysyl-L-lysine(out) = L-lysyl-L-lysine(in). It carries out the reaction L-lysyl-glycine(out) = L-lysyl-glycine(in). The catalysed reaction is L-alpha-aminoacyl-L-histidine(out) = L-alpha-aminoacyl-L-histidine(in). The enzyme catalyses L-histidyl-L-alpha-amino acid(out) = L-histidyl-L-alpha-amino acid(in). It catalyses the reaction L-histidyl-glycine(out) = L-histidyl-glycine(in). Functionally, lysosomal dipeptide uniporter that selectively exports lysine, arginine or histidine-containing dipeptides with a net positive charge from the lysosome lumen into the cytosol. Could play a role in a specific type of protein O-glycosylation indirectly regulating macrophages migration and tissue invasion. Also essential for liver homeostasis. In Danio rerio (Zebrafish), this protein is Lysosomal dipeptide transporter MFSD1 (mfsd1).